Reading from the N-terminus, the 189-residue chain is Small ribosomal subunit protein uS5 (189 aa).

The S5 DRBM domain occupies Phe-20–Val-83.

Belongs to the universal ribosomal protein uS5 family. As to quaternary structure, part of the 30S ribosomal subunit. Contacts proteins S4 and S8.

In terms of biological role, with S4 and S12 plays an important role in translational accuracy. Its function is as follows. Located at the back of the 30S subunit body where it stabilizes the conformation of the head with respect to the body. This chain is Small ribosomal subunit protein uS5, found in Methylocella silvestris (strain DSM 15510 / CIP 108128 / LMG 27833 / NCIMB 13906 / BL2).